The following is a 249-amino-acid chain: Large ribosomal subunit protein uL16m (249 aa).

Belongs to the universal ribosomal protein uL16 family. Component of the mitochondrial large ribosomal subunit (mt-LSU). Mature N.crassa 74S mitochondrial ribosomes consist of a small (37S) and a large (54S) subunit. The 37S small subunit contains a 16S ribosomal RNA (16S mt-rRNA) and 32 different proteins. The 54S large subunit contains a 23S rRNA (23S mt-rRNA) and 42 different proteins.

It is found in the mitochondrion. Component of the mitochondrial ribosome (mitoribosome), a dedicated translation machinery responsible for the synthesis of mitochondrial genome-encoded proteins, including at least some of the essential transmembrane subunits of the mitochondrial respiratory chain. The mitoribosomes are attached to the mitochondrial inner membrane and translation products are cotranslationally integrated into the membrane. In Neurospora crassa (strain ATCC 24698 / 74-OR23-1A / CBS 708.71 / DSM 1257 / FGSC 987), this protein is Large ribosomal subunit protein uL16m (mrpl16).